A 336-amino-acid chain; its full sequence is Potassium channel subfamily K member 1 (336 aa).

Residues Met1–Ala20 are Cytoplasmic-facing. A helical membrane pass occupies residues Trp21 to Phe41. At Ser42–Asp103 the chain is on the extracellular side. The N-linked (GlcNAc...) asparagine glycan is linked to Asn95. The segment at residues Phe104–Ser116 is an intramembrane region (helical). An intramembrane segment occupies Thr117–His122. Residues Thr117–His122 are selectivity filter 1. Residues Thr123–Ala132 are Extracellular-facing. Residues Phe133–Val156 form a helical membrane-spanning segment. Topologically, residues Thr157–Ile181 are cytoplasmic. Residues Val182–Val202 form a helical membrane-spanning segment. The Extracellular portion of the chain corresponds to Phe203–Asn211. The segment at residues Phe212–Ser224 is an intramembrane region (helical). The segment at Thr225 to Asp230 is selectivity filter 2. Residues Thr225 to Tyr231 lie within the membrane without spanning it. The Extracellular portion of the chain corresponds to Val232–Glu243. The chain crosses the membrane as a helical span at residues Leu244 to Phe267. Residues Cys268 to His336 are Cytoplasmic-facing. Lys274 is covalently cross-linked (Glycyl lysine isopeptide (Lys-Gly) (interchain with G-Cter in SUMO)). Positions Ile293–Leu299 are important for intracellular retention in recycling endosomes. The tract at residues Gly310–His336 is disordered. A Phosphoserine modification is found at Ser326.

It belongs to the two pore domain potassium channel (TC 1.A.1.8) family. Homodimer; disulfide-linked. Heterodimer with KCNK2; disulfide-linked. In astrocytes, forms mostly heterodimeric potassium channels with KCNK2, with only a minor proportion of functional channels containing homodimeric KCNK1. Interacts with KCNK3 and KCNK9, forming functional heterodimeric channels. Interacts with GNG4. Identified in a complex with PSD and ARF6; interacts only with PSD that is bound to ARF6. Interacts with UBE2I. In terms of processing, sumoylation is controversial. Sumoylated by UBE2I. Not sumoylated when expressed in xenopus oocytes or mammalian cells. Sumoylation inactivates the channel, but does not interfere with expression at the cell membrane. Sumoylation of a single subunit is sufficient to silence the dimeric channel. Sumoylation of KCNK1 is sufficient to silence heterodimeric channels formed by KCNK1 and KCNK3 or KCNK9. Desumoylated by SENP1; this activates the channel. Desumoylated by SENP1; this strongly increases halothane-mediated activation of heterodimeric channels formed with KCNK9. SENP1 treatment has no effect. As to expression, detected in brain and in kidney cortex and medulla, especially at the renal brush border membranes of the proximal convoluted tubules, in distal tubules and on intercalated cells of the collecting duct. Detected in cerebellum granule neurons. Detected in astrocytes in hippocampus stratum radiatum. Highly expressed in the stria vascularis in the cochlea. Detected in neurons in Scarpa's ganglion in the inner ear, at nerve terminals in the crista ampullaris, in supporting cells and dark cells, but not in hair cells (at protein level). Detected in the brain cerebellar granule cell layer, amygdala, thalamus reticular nucleus, habenula, mesencephalic trigeminal neurons, neocortex and piriform cortex, and at lower levels in the olfactory bulb. Detected in Scarpa's ganglia and crista ampullaris in the inner ear.

Its subcellular location is the cell membrane. It is found in the recycling endosome. The protein resides in the apical cell membrane. It localises to the cytoplasmic vesicle. The protein localises to the perikaryon. Its subcellular location is the cell projection. It is found in the dendrite. The protein resides in the synaptic cell membrane. It carries out the reaction K(+)(in) = K(+)(out). It catalyses the reaction NH4(+)(in) = NH4(+)(out). The enzyme catalyses Na(+)(in) = Na(+)(out). The catalysed reaction is Rb(+)(in) = Rb(+)(out). It carries out the reaction Cs(+)(in) = Cs(+)(out). It catalyses the reaction Li(+)(in) = Li(+)(out). The enzyme catalyses L-glutamate(out) = L-glutamate(in). The catalysed reaction is chloride(in) = chloride(out). Inhibited by 100 uM quinine. Slightly inhibited by Ba(+). Activity is first increased and then decreased when the extracellular pH is lowered to 6.0. Functionally, ion channel that contributes to passive transmembrane potassium transport and to the regulation of the resting membrane potential in brain astrocytes, but also in kidney and in other tissues. Forms dimeric channels through which potassium ions pass in accordance with their electrochemical gradient. The channel is selective for K(+) ions at physiological potassium concentrations and at neutral pH, but becomes permeable to Na(+) at subphysiological K(+) levels and upon acidification of the extracellular medium. The homodimer has very low potassium channel activity, when expressed in heterologous systems, and can function as weakly inward rectifying potassium channel. Channel activity is modulated by activation of serotonin receptors. Heterodimeric channels containing KCNK1 and KCNK2 have much higher activity, and may represent the predominant form in astrocytes. Heterodimeric channels containing KCNK1 and KCNK3 or KCNK9 have much higher activity. Heterodimeric channels formed by KCNK1 and KCNK9 may contribute to halothane-sensitive currents. Mediates outward rectifying potassium currents in dentate gyrus granule cells and contributes to the regulation of their resting membrane potential. Contributes to the regulation of action potential firing in dentate gyrus granule cells and down-regulates their intrinsic excitability. Contributes to the regulation of the resting membrane potential of pancreatic beta cells. In astrocytes, the heterodimer formed by KCNK1 and KCNK2 is required for rapid glutamate release in response to activation of G-protein coupled receptors, such as F2R and CNR1. Required for normal ion and water transport in the kidney. The low channel activity of homodimeric KCNK1 may be due to sumoylation. The low channel activity may be due to rapid internalization from the cell membrane and retention in recycling endosomes. Permeable to monovalent cations with ion selectivity for K(+) &gt; Rb(+) &gt;&gt; NH4(+) &gt;&gt; Cs(+) = Na(+) = Li(+). In Rattus norvegicus (Rat), this protein is Potassium channel subfamily K member 1.